Here is a 167-residue protein sequence, read N- to C-terminus: MTSFQAVSFALGCNTLVACYAFTVLEKRSLMTSCTNALSFLFFLLTLRRIHRHWYKPYGAFLLIFVLTLRWFRGPIAWVVVDVVFASCNVVFFSPALSDENWPYVSFFGVVVVIAVHIIVVTHIGAFTACCLLKRVSLKSSEEKKKKKKKKKEKSLHTEREKKKKKF.

The segment at 140–167 is disordered; that stretch reads SSEEKKKKKKKKKEKSLHTEREKKKKKF. Residues 145–154 are compositionally biased toward basic residues; it reads KKKKKKKKEK.

This is an uncharacterized protein from Saccharomyces cerevisiae (strain ATCC 204508 / S288c) (Baker's yeast).